The following is a 429-amino-acid chain: Glutamyl-tRNA reductase (429 aa).

Substrate-binding positions include 49–52 (TCNR), S107, 112–114 (EPQ), and Q118. Catalysis depends on C50, which acts as the Nucleophile. NADP(+) is bound at residue 187–192 (GAGKTI).

It belongs to the glutamyl-tRNA reductase family. As to quaternary structure, homodimer.

The catalysed reaction is (S)-4-amino-5-oxopentanoate + tRNA(Glu) + NADP(+) = L-glutamyl-tRNA(Glu) + NADPH + H(+). Its pathway is porphyrin-containing compound metabolism; protoporphyrin-IX biosynthesis; 5-aminolevulinate from L-glutamyl-tRNA(Glu): step 1/2. Functionally, catalyzes the NADPH-dependent reduction of glutamyl-tRNA(Glu) to glutamate 1-semialdehyde (GSA). The polypeptide is Glutamyl-tRNA reductase (Marinobacter nauticus (strain ATCC 700491 / DSM 11845 / VT8) (Marinobacter aquaeolei)).